Reading from the N-terminus, the 216-residue chain is 3-keto-L-gulonate-6-phosphate decarboxylase UlaD (216 aa).

Asp11 serves as a coordination point for substrate. Residues Glu33 and Asp62 each contribute to the Mg(2+) site. Arg192 contacts substrate.

It belongs to the HPS/KGPDC family. KGPDC subfamily. Homodimer. The cofactor is Mg(2+).

The catalysed reaction is 3-dehydro-L-gulonate 6-phosphate + H(+) = L-xylulose 5-phosphate + CO2. It participates in cofactor degradation; L-ascorbate degradation; D-xylulose 5-phosphate from L-ascorbate: step 2/4. Functionally, catalyzes the decarboxylation of 3-keto-L-gulonate-6-P into L-xylulose-5-P. Is involved in the anaerobic L-ascorbate utilization. The protein is 3-keto-L-gulonate-6-phosphate decarboxylase UlaD of Shigella dysenteriae serotype 1 (strain Sd197).